Reading from the N-terminus, the 158-residue chain is NAD(P)H-quinone oxidoreductase subunit J, chloroplastic (158 aa).

This sequence belongs to the complex I 30 kDa subunit family. In terms of assembly, NDH is composed of at least 16 different subunits, 5 of which are encoded in the nucleus.

The protein localises to the plastid. Its subcellular location is the chloroplast thylakoid membrane. It catalyses the reaction a plastoquinone + NADH + (n+1) H(+)(in) = a plastoquinol + NAD(+) + n H(+)(out). The enzyme catalyses a plastoquinone + NADPH + (n+1) H(+)(in) = a plastoquinol + NADP(+) + n H(+)(out). Functionally, NDH shuttles electrons from NAD(P)H:plastoquinone, via FMN and iron-sulfur (Fe-S) centers, to quinones in the photosynthetic chain and possibly in a chloroplast respiratory chain. The immediate electron acceptor for the enzyme in this species is believed to be plastoquinone. Couples the redox reaction to proton translocation, and thus conserves the redox energy in a proton gradient. This chain is NAD(P)H-quinone oxidoreductase subunit J, chloroplastic, found in Nymphaea alba (White water-lily).